The following is a 643-amino-acid chain: RNA-binding protein RO60 (643 aa).

The 411-residue stretch at 63 to 473 (VENNAGGFVF…AFVNAPPTGK (411 aa)) folds into the TROVE domain. An RNA-binding region spans residues 186–390 (RTPTHLFEFV…SMPMTAMIRN (205 aa)). A VWFA-like domain region spans residues 465-643 (FVNAPPTGKR…IVHEFVTGKI (179 aa)). 3 residues coordinate a divalent metal cation: Ser-482, Ser-484, and Thr-549.

The protein belongs to the Ro 60 kDa family.

The protein resides in the cytoplasm. RNA-binding protein that binds to misfolded non-coding RNAs, pre-5S rRNA, and several small cytoplasmic RNA molecules known as Y RNAs. This is RNA-binding protein RO60 from Caenorhabditis elegans.